Here is a 1435-residue protein sequence, read N- to C-terminus: Protein SPP41 (1435 aa).

7 disordered regions span residues 16–74, 88–265, 286–309, 322–424, 442–482, 519–708, and 934–972; these read VGNL…NIEI, VANA…ENTL, AKQT…VEAQ, ELLS…DDEF, ETST…DSLD, SVSD…MKVP, and QQLD…AGHT. Residues 27–42 show a composition bias toward acidic residues; sequence GQEEGEVQGGEQEGDD. Basic and acidic residues-rich tracts occupy residues 53–63, 98–127, and 139–154; these read IEPKHPDDSQH, EQAK…KEQQ, and LKSD…ERRV. The UIM domain occupies 171–190; that stretch reads QDDENLRMAILESLQELNTN. Over residues 196-205 the composition is skewed to basic and acidic residues; sequence EPEKHEHAAP. Basic residues predominate over residues 211–223; it reads SKKSSKKKKKDKS. Over residues 224-234 the composition is skewed to basic and acidic residues; sequence KNRESSKDKSS. Positions 235–249 are enriched in basic residues; it reads KKSKSSSHSKKHAKD. Polar residues predominate over residues 286-301; that stretch reads AKQTVDIQDNSHTDNT. Basic and acidic residues predominate over residues 345–355; it reads KAVEPPRKPTA. The span at 367 to 383 shows a compositional bias: basic residues; the sequence is KPKKRPPQEKKKTKSKT. The span at 384–398 shows a compositional bias: low complexity; that stretch reads SKAASTANKSPASES. Composition is skewed to polar residues over residues 442-451 and 459-482; these read ETSTHTATQD and DFTS…DSLD. Composition is skewed to basic and acidic residues over residues 524–548, 610–628, and 637–652; these read LPHD…EKKT, KNKE…AREE, and KQRL…KIVE. Residues 665–674 show a composition bias toward basic residues; that stretch reads KSGKPKKPYR. Residues 676-691 are compositionally biased toward basic and acidic residues; sequence WTPEELLKRSQEAEKP. A Nuclear localization signal motif is present at residues 683 to 699; it reads KRSQEAEKPRKVKKERK. Basic residues predominate over residues 692 to 706; that stretch reads RKVKKERKKKEKKMK. Residue lysine 981 forms a Glycyl lysine isopeptide (Lys-Gly) (interchain with G-Cter in SUMO) linkage. Positions 1005–1014 are enriched in basic and acidic residues; the sequence is KLELTKRAES. The interval 1005-1125 is disordered; sequence KLELTKRAES…DSVNTTTGKP (121 aa). A Phosphoserine modification is found at serine 1014. Positions 1021–1032 are enriched in polar residues; that stretch reads NVETAKETQSVQ. Composition is skewed to basic and acidic residues over residues 1033–1082 and 1091–1103; these read EIKE…EKIA and LSDK…KSTL. Serine 1067 is subject to Phosphoserine. Residues 1108–1123 show a composition bias toward polar residues; sequence AQLTGNEPDSVNTTTG. A Glycyl lysine isopeptide (Lys-Gly) (interchain with G-Cter in SUMO) cross-link involves residue lysine 1154.

Interacts with PRP8 and RAP1.

It is found in the nucleus. Negative regulator of PRP3 and PRP4 genes. The sequence is that of Protein SPP41 (SPP41) from Saccharomyces cerevisiae (strain ATCC 204508 / S288c) (Baker's yeast).